A 340-amino-acid polypeptide reads, in one-letter code: Heat-inducible transcription repressor HrcA (340 aa).

This sequence belongs to the HrcA family.

Its function is as follows. Negative regulator of class I heat shock genes (grpE-dnaK-dnaJ and groELS operons). Prevents heat-shock induction of these operons. The chain is Heat-inducible transcription repressor HrcA from Burkholderia vietnamiensis (strain G4 / LMG 22486) (Burkholderia cepacia (strain R1808)).